Reading from the N-terminus, the 545-residue chain is uncharacterized protein (545 aa).

Composition is skewed to basic and acidic residues over residues 34–44 (PMNKQNEKLKT) and 53–63 (PRNDYSRRVSR). Disordered stretches follow at residues 34–98 (PMNK…PESN), 269–296 (QNGT…PQDS), and 415–444 (ERPQ…SAPE). Residues 69 to 78 (TDSSEQQITA) show a composition bias toward polar residues. Residues 415–428 (ERPQRKTEHVKTPE) are compositionally biased toward basic and acidic residues. The segment covering 429-441 (ENLQTKNPTTMTS) has biased composition (polar residues).

This is an uncharacterized protein from Mus musculus (Mouse).